Here is a 248-residue protein sequence, read N- to C-terminus: Probable phosphatase VCM66_A0854 (248 aa).

9 residues coordinate Zn(2+): H8, H10, H16, H41, E74, H102, H132, D194, and H196.

The protein belongs to the PHP family. Zn(2+) serves as cofactor.

The chain is Probable phosphatase VCM66_A0854 from Vibrio cholerae serotype O1 (strain M66-2).